Here is a 492-residue protein sequence, read N- to C-terminus: N-succinylglutamate 5-semialdehyde dehydrogenase (492 aa).

220 to 225 (GSAGTG) is a binding site for NAD(+). Catalysis depends on residues glutamate 243 and cysteine 277.

Belongs to the aldehyde dehydrogenase family. AstD subfamily.

It catalyses the reaction N-succinyl-L-glutamate 5-semialdehyde + NAD(+) + H2O = N-succinyl-L-glutamate + NADH + 2 H(+). The protein operates within amino-acid degradation; L-arginine degradation via AST pathway; L-glutamate and succinate from L-arginine: step 4/5. Catalyzes the NAD-dependent reduction of succinylglutamate semialdehyde into succinylglutamate. The chain is N-succinylglutamate 5-semialdehyde dehydrogenase from Cronobacter sakazakii (strain ATCC BAA-894) (Enterobacter sakazakii).